A 470-amino-acid chain; its full sequence is Cyclin-dependent kinase E-1 (470 aa).

A Protein kinase domain is found at 25 to 333; it reads YNLVGKIGEG…ASQALEHEYF (309 aa). Residues 31–39 and Lys55 each bind ATP; that span reads IGEGTYGLV. The residue at position 36 (Tyr36) is a Phosphotyrosine. The Proton acceptor role is filled by Asp154. Residues 428–470 form a disordered region; that stretch reads LNPSVPLQQQRGMAQPHQQQQLRRKDPGMGMSGYAPPNKSRRL. Residues 432–448 show a composition bias toward polar residues; the sequence is VPLQQQRGMAQPHQQQQ.

The protein belongs to the protein kinase superfamily. CMGC Ser/Thr protein kinase family. CDC2/CDKX subfamily. As to quaternary structure, interacts with MED14, HDA19 and LUG. Interacts with KIN10. As to expression, expressed in roots, leaves and stems. Expressed in young dividing tissue, such as shoot and root tips, lateral root primordia, young leaves and flowers. Expressed in the inflorescence meristem, inflorescence stem and young flowers.

The protein resides in the nucleus. It catalyses the reaction L-seryl-[protein] + ATP = O-phospho-L-seryl-[protein] + ADP + H(+). The catalysed reaction is L-threonyl-[protein] + ATP = O-phospho-L-threonyl-[protein] + ADP + H(+). It carries out the reaction [DNA-directed RNA polymerase] + ATP = phospho-[DNA-directed RNA polymerase] + ADP + H(+). Involved in cell differentiation. Required for the specification of stamen and carpel identities and for the proper termination of stem cells in the floral meristem. The protein is Cyclin-dependent kinase E-1 (CDKE-1) of Arabidopsis thaliana (Mouse-ear cress).